The chain runs to 634 residues: Chaperone protein HtpG (634 aa).

The a; substrate-binding stretch occupies residues 1–342 (MTVETDKQTL…SSDLSLNVSR (342 aa)). The tract at residues 343–559 (EILQSGPVVD…QGDLGLQMRQ (217 aa)) is b. The segment at 560–634 (LLEASGQAVP…LNKLLLELSV (75 aa)) is c.

This sequence belongs to the heat shock protein 90 family. Homodimer.

The protein resides in the cytoplasm. In terms of biological role, molecular chaperone. Has ATPase activity. The protein is Chaperone protein HtpG of Xanthomonas euvesicatoria pv. vesicatoria (strain 85-10) (Xanthomonas campestris pv. vesicatoria).